A 249-amino-acid chain; its full sequence is Probable transcriptional regulatory protein CYB_1350 (249 aa).

This sequence belongs to the TACO1 family.

The protein resides in the cytoplasm. The sequence is that of Probable transcriptional regulatory protein CYB_1350 from Synechococcus sp. (strain JA-2-3B'a(2-13)) (Cyanobacteria bacterium Yellowstone B-Prime).